Here is a 620-residue protein sequence, read N- to C-terminus: MSFDIAKYPTLALVDSTQELRLLPKESLPKLCDELRRYLLDSVSRSSGHFASGLGTVELTVALHYVYNTPFDQLIWDVGHQAYPHKILTGRRDKIGTIRQKGGLHPFPWRGESEYDVLSVGHSSTSISAGIGIAVAAEKEGKNRRTVCVIGDGAITAGMAFEAMNHAGDIRPDMLVVLNDNEMSISENVGALNNHLAQLLSGKLYSSLREGGKKVFSGVPPIKELLKRTEEHIKGMVVPGTLFEELGFNYIGPVDGHDVLGLITTLKNMRDLKGPQFLHIMTKKGRGYEPAEKDPITFHAVPKFDPSSGCLPKSSGGLPSYSKIFGDWLCETAAKDNKLMAITPAMREGSGMVEFSRKFPDRYFDVAIAEQHAVTFAAGLAIGGYKPIVAIYSTFLQRAYDQVLHDVAIQKLPVLFAIDRAGIVGADGQTHQGAFDLSYLRCIPEMVIMTPSDENECRQMLYTGYHYNDGPSAVRYPRGNAVGVELTPLEKLPIGKGIVKRRGEKLAILNFGTLMPDAAKVAESLNATLVDMRFVKPLDEALILEMAASHEALVTVEENAIMGGAGSGVNEVLMAHRKPVPVLNIGLPDFFIPQGTQEEMRAELGLGAAGMEAKIKAWLA.

Residues His80 and Gly121–Ser123 each bind thiamine diphosphate. Asp152 provides a ligand contact to Mg(2+). Thiamine diphosphate contacts are provided by residues Gly153 to Ala154, Asn181, Tyr288, and Glu370. Mg(2+) is bound at residue Asn181.

This sequence belongs to the transketolase family. DXPS subfamily. As to quaternary structure, homodimer. Requires Mg(2+) as cofactor. Thiamine diphosphate is required as a cofactor.

It catalyses the reaction D-glyceraldehyde 3-phosphate + pyruvate + H(+) = 1-deoxy-D-xylulose 5-phosphate + CO2. It functions in the pathway metabolic intermediate biosynthesis; 1-deoxy-D-xylulose 5-phosphate biosynthesis; 1-deoxy-D-xylulose 5-phosphate from D-glyceraldehyde 3-phosphate and pyruvate: step 1/1. Functionally, catalyzes the acyloin condensation reaction between C atoms 2 and 3 of pyruvate and glyceraldehyde 3-phosphate to yield 1-deoxy-D-xylulose-5-phosphate (DXP). The chain is 1-deoxy-D-xylulose-5-phosphate synthase from Escherichia coli (strain 55989 / EAEC).